The chain runs to 257 residues: UPF0246 protein BF3795 (257 aa).

It belongs to the UPF0246 family.

This is UPF0246 protein BF3795 from Bacteroides fragilis (strain ATCC 25285 / DSM 2151 / CCUG 4856 / JCM 11019 / LMG 10263 / NCTC 9343 / Onslow / VPI 2553 / EN-2).